The chain runs to 393 residues: NAD(P)H-quinone oxidoreductase subunit H, chloroplastic (393 aa).

It belongs to the complex I 49 kDa subunit family. In terms of assembly, NDH is composed of at least 16 different subunits, 5 of which are encoded in the nucleus.

Its subcellular location is the plastid. It is found in the chloroplast thylakoid membrane. The enzyme catalyses a plastoquinone + NADH + (n+1) H(+)(in) = a plastoquinol + NAD(+) + n H(+)(out). It catalyses the reaction a plastoquinone + NADPH + (n+1) H(+)(in) = a plastoquinol + NADP(+) + n H(+)(out). NDH shuttles electrons from NAD(P)H:plastoquinone, via FMN and iron-sulfur (Fe-S) centers, to quinones in the photosynthetic chain and possibly in a chloroplast respiratory chain. The immediate electron acceptor for the enzyme in this species is believed to be plastoquinone. Couples the redox reaction to proton translocation, and thus conserves the redox energy in a proton gradient. This chain is NAD(P)H-quinone oxidoreductase subunit H, chloroplastic, found in Nasturtium officinale (Watercress).